The primary structure comprises 307 residues: Glycerol-3-phosphate dehydrogenase [NAD(P)+] (307 aa).

NADPH is bound by residues tryptophan 14, arginine 34, arginine 35, and lysine 82. Positions 82 and 110 each coordinate sn-glycerol 3-phosphate. Residue serine 114 participates in NADPH binding. 5 residues coordinate sn-glycerol 3-phosphate: lysine 165, aspartate 218, serine 228, arginine 229, and asparagine 230. Lysine 165 serves as the catalytic Proton acceptor. Residue arginine 229 coordinates NADPH. Glutamate 255 lines the NADPH pocket.

The protein belongs to the NAD-dependent glycerol-3-phosphate dehydrogenase family.

It is found in the cytoplasm. The enzyme catalyses sn-glycerol 3-phosphate + NAD(+) = dihydroxyacetone phosphate + NADH + H(+). It catalyses the reaction sn-glycerol 3-phosphate + NADP(+) = dihydroxyacetone phosphate + NADPH + H(+). It participates in membrane lipid metabolism; glycerophospholipid metabolism. Catalyzes the reduction of the glycolytic intermediate dihydroxyacetone phosphate (DHAP) to sn-glycerol 3-phosphate (G3P), the key precursor for phospholipid synthesis. This is Glycerol-3-phosphate dehydrogenase [NAD(P)+] from Trichormus variabilis (strain ATCC 29413 / PCC 7937) (Anabaena variabilis).